Here is a 336-residue protein sequence, read N- to C-terminus: Pyridoxal 5'-phosphate synthase subunit PdxS (336 aa).

D-ribose 5-phosphate is bound at residue Asp-64. Lys-121 functions as the Schiff-base intermediate with D-ribose 5-phosphate in the catalytic mechanism. Gly-193 provides a ligand contact to D-ribose 5-phosphate. Lys-205 is a D-glyceraldehyde 3-phosphate binding site. D-ribose 5-phosphate-binding positions include Gly-254 and 275 to 276 (GS).

Belongs to the PdxS/SNZ family. In terms of assembly, in the presence of PdxT, forms a dodecamer of heterodimers.

It carries out the reaction aldehydo-D-ribose 5-phosphate + D-glyceraldehyde 3-phosphate + L-glutamine = pyridoxal 5'-phosphate + L-glutamate + phosphate + 3 H2O + H(+). It functions in the pathway cofactor biosynthesis; pyridoxal 5'-phosphate biosynthesis. Catalyzes the formation of pyridoxal 5'-phosphate from ribose 5-phosphate (RBP), glyceraldehyde 3-phosphate (G3P) and ammonia. The ammonia is provided by the PdxT subunit. Can also use ribulose 5-phosphate and dihydroxyacetone phosphate as substrates, resulting from enzyme-catalyzed isomerization of RBP and G3P, respectively. This is Pyridoxal 5'-phosphate synthase subunit PdxS from Pyrobaculum aerophilum (strain ATCC 51768 / DSM 7523 / JCM 9630 / CIP 104966 / NBRC 100827 / IM2).